Here is a 200-residue protein sequence, read N- to C-terminus: Probable GTP-binding protein EngB (200 aa).

The 176-residue stretch at 24-199 folds into the EngB-type G domain; it reads EGAEVAFAGR…RGVIGGWLGL (176 aa). Residues 32-39, 59-63, 77-80, 144-147, and 178-180 each bind GTP; these read GRSNAGKS, GRTQQ, DLPG, TKAD, and FSG. 2 residues coordinate Mg(2+): Ser-39 and Thr-61.

This sequence belongs to the TRAFAC class TrmE-Era-EngA-EngB-Septin-like GTPase superfamily. EngB GTPase family. Mg(2+) serves as cofactor.

Its function is as follows. Necessary for normal cell division and for the maintenance of normal septation. The protein is Probable GTP-binding protein EngB of Stenotrophomonas maltophilia (strain K279a).